The following is a 349-amino-acid chain: Phosphoribosylformylglycinamidine cyclo-ligase (349 aa).

Belongs to the AIR synthase family.

It localises to the cytoplasm. The catalysed reaction is 2-formamido-N(1)-(5-O-phospho-beta-D-ribosyl)acetamidine + ATP = 5-amino-1-(5-phospho-beta-D-ribosyl)imidazole + ADP + phosphate + H(+). Its pathway is purine metabolism; IMP biosynthesis via de novo pathway; 5-amino-1-(5-phospho-D-ribosyl)imidazole from N(2)-formyl-N(1)-(5-phospho-D-ribosyl)glycinamide: step 2/2. This is Phosphoribosylformylglycinamidine cyclo-ligase from Psychrobacter arcticus (strain DSM 17307 / VKM B-2377 / 273-4).